The sequence spans 200 residues: TATA-box-binding protein 2 (200 aa).

2 repeat units span residues 25 to 101 and 115 to 192.

The protein belongs to the TBP family. As to quaternary structure, belongs to the TFIID complex together with the TBP-associated factors (TAFs). Binds DNA as monomer. Interacts with TAF1 (via N-terminus). Interacts with TFIIB1. Interacts with PTF2. Interacts with HAT5/ATHB-1 and ATHB-7. Component of a nuclear protein complex containing at least TATA binding proteins (TBPs, e.g. TBP1 and TBP2) and ATX1.

It is found in the nucleus. Functionally, general transcription factor (GTF) that functions at the core of the DNA-binding multiprotein factor TFIID. Binding of TFIID to the TATA box is the initial transcriptional step of the pre-initiation complex (PIC), playing a role in the activation of eukaryotic genes transcribed by RNA polymerase II. Interacts with TFIIB1 and is required for activated transcription and possibly basal transcription. May act as GTF of RNA polymerase I-dependent transcription and rRNA synthesis. Forms a ternary complex with PBRP1 and the rDNA promoter region. This Arabidopsis thaliana (Mouse-ear cress) protein is TATA-box-binding protein 2.